The sequence spans 487 residues: GPI mannosyltransferase 1 (487 aa).

A run of 3 helical transmembrane segments spans residues 26–46 (PLPL…YGLW), 87–107 (ILAW…GPWA), and 121–141 (VLFA…LVMG). The interval 147–175 (SAAKGKEKDTEKTKEGGKKGPSVTASTGM) is disordered. A compositionally biased stretch (basic and acidic residues) spans 150–164 (KGKEKDTEKTKEGGK). 7 helical membrane-spanning segments follow: residues 205 to 225 (LLGV…ITLA), 227 to 247 (LLLG…PAIV), 289 to 309 (LLLA…MYRL), 359 to 379 (IESL…PLTL), 393 to 413 (FAFV…YLVL), 429 to 449 (MGLV…QQAY), and 462 to 482 (GLWM…GVIV).

This sequence belongs to the PIGM family.

The protein resides in the endoplasmic reticulum membrane. It participates in glycolipid biosynthesis; glycosylphosphatidylinositol-anchor biosynthesis. Functionally, mannosyltransferase involved in glycosylphosphatidylinositol-anchor biosynthesis. Transfers the first alpha-1,4-mannose to GlcN-acyl-PI during GPI precursor assembly. Required for cell wall integrity. This chain is GPI mannosyltransferase 1 (gim-1), found in Neurospora crassa (strain ATCC 24698 / 74-OR23-1A / CBS 708.71 / DSM 1257 / FGSC 987).